The primary structure comprises 212 residues: Peptide methionine sulfoxide reductase MsrA (212 aa).

Residue Cys-52 is part of the active site.

Belongs to the MsrA Met sulfoxide reductase family.

It carries out the reaction L-methionyl-[protein] + [thioredoxin]-disulfide + H2O = L-methionyl-(S)-S-oxide-[protein] + [thioredoxin]-dithiol. The enzyme catalyses [thioredoxin]-disulfide + L-methionine + H2O = L-methionine (S)-S-oxide + [thioredoxin]-dithiol. In terms of biological role, has an important function as a repair enzyme for proteins that have been inactivated by oxidation. Catalyzes the reversible oxidation-reduction of methionine sulfoxide in proteins to methionine. This is Peptide methionine sulfoxide reductase MsrA from Escherichia coli O127:H6 (strain E2348/69 / EPEC).